The chain runs to 146 residues: Probable acetyltransferase HI_0677 (146 aa).

The region spanning 1 to 146 (MKLFKAEQWN…ERLFELSLSC (146 aa)) is the N-acetyltransferase domain.

In Haemophilus influenzae (strain ATCC 51907 / DSM 11121 / KW20 / Rd), this protein is Probable acetyltransferase HI_0677.